A 90-amino-acid polypeptide reads, in one-letter code: Probable Fe(2+)-trafficking protein (90 aa).

The protein belongs to the Fe(2+)-trafficking protein family.

Functionally, could be a mediator in iron transactions between iron acquisition and iron-requiring processes, such as synthesis and/or repair of Fe-S clusters in biosynthetic enzymes. The chain is Probable Fe(2+)-trafficking protein from Albidiferax ferrireducens (strain ATCC BAA-621 / DSM 15236 / T118) (Rhodoferax ferrireducens).